The sequence spans 235 residues: Endonuclease V (235 aa).

2 residues coordinate Mg(2+): aspartate 47 and aspartate 115.

The protein belongs to the endonuclease V family. Mg(2+) serves as cofactor.

The protein resides in the cytoplasm. It catalyses the reaction Endonucleolytic cleavage at apurinic or apyrimidinic sites to products with a 5'-phosphate.. Functionally, DNA repair enzyme involved in the repair of deaminated bases. Selectively cleaves double-stranded DNA at the second phosphodiester bond 3' to a deoxyinosine leaving behind the intact lesion on the nicked DNA. The polypeptide is Endonuclease V (Myxococcus xanthus (strain DK1622)).